The following is a 937-amino-acid chain: Aconitate hydratase A (937 aa).

The disordered stretch occupies residues 410–450; it reads MANEGGFQPGSTSDLDNYNASWPGEGESAAANAEGRPSNPV. Polar residues predominate over residues 418 to 429; that stretch reads PGSTSDLDNYNA. The span at 433-444 shows a compositional bias: low complexity; sequence GEGESAAANAEG. Positions 475, 541, and 544 each coordinate [4Fe-4S] cluster.

The protein belongs to the aconitase/IPM isomerase family. Monomer. [4Fe-4S] cluster is required as a cofactor.

It catalyses the reaction citrate = D-threo-isocitrate. The catalysed reaction is (2S,3R)-3-hydroxybutane-1,2,3-tricarboxylate = 2-methyl-cis-aconitate + H2O. It participates in carbohydrate metabolism; tricarboxylic acid cycle; isocitrate from oxaloacetate: step 2/2. Its pathway is organic acid metabolism; propanoate degradation. In terms of biological role, involved in the catabolism of short chain fatty acids (SCFA) via the tricarboxylic acid (TCA)(acetyl degradation route) and probably via the 2-methylcitrate cycle I (propionate degradation route). Catalyzes the reversible isomerization of citrate to isocitrate via cis-aconitate. Could catalyze the hydration of 2-methyl-cis-aconitate to yield (2R,3S)-2-methylisocitrate. The apo form of AcnA functions as a RNA-binding regulatory protein. This Corynebacterium efficiens (strain DSM 44549 / YS-314 / AJ 12310 / JCM 11189 / NBRC 100395) protein is Aconitate hydratase A (acn).